Consider the following 1243-residue polypeptide: Probable phospholipid-transporting ATPase 7 (1243 aa).

Topologically, residues 1 to 74 (MGRRRIRSRI…TTRYNLITFL (74 aa)) are cytoplasmic. Residues 75 to 96 (PKCLYEQFHRVANFYFLVAAIL) traverse the membrane as a helical segment. The Extracellular segment spans residues 97-100 (SVFP). A helical membrane pass occupies residues 101–123 (LSPFNKWSMIAPLIFVVGLSMGK). The Cytoplasmic portion of the chain corresponds to 124–305 (EALEDWRRFM…SRIEKRMDYI (182 aa)). Residues 306–327 (IYTLFALLVLVSFISSLGFAVM) form a helical membrane-spanning segment. Residues 328–359 (TKMHMGDWWYLRPDKPERLTNPRNPFHAWVVH) lie on the Extracellular side of the membrane. The helical transmembrane segment at 360–377 (LITAVLLYGYLIPISLYV) threads the bilayer. The Cytoplasmic segment spans residues 378-941 (SIELVKVLQA…HGHWCYKRIA (564 aa)). Aspartate 425 (4-aspartylphosphate intermediate) is an active-site residue. Lysine 623 is covalently cross-linked (Glycyl lysine isopeptide (Lys-Gly) (interchain with G-Cter in ubiquitin)). Aspartate 886 and aspartate 890 together coordinate Mg(2+). The helical transmembrane segment at 942–961 (QMICYFFYKNITFGLTLFYF) threads the bilayer. The Extracellular portion of the chain corresponds to 962–975 (EAFTGFSGQAIYND). The helical transmembrane segment at 976-995 (SYLLLFNVILTSLPVIALGV) threads the bilayer. At 996 to 1025 (FEQDVSSEVCLQFPALYQQGPKNLFFDWYR) the chain is on the cytoplasmic side. The chain crosses the membrane as a helical span at residues 1026–1048 (IIGWMANGVYASVVIFSLNIGIF). At 1049-1061 (HVQSFCSGGQTAD) the chain is on the extracellular side. The chain crosses the membrane as a helical span at residues 1062–1084 (MDAMGTAMFTCIIWAVNVQIALT). Residues 1085–1090 (MSHFTW) are Cytoplasmic-facing. A helical transmembrane segment spans residues 1091–1111 (IQHVLIWGSIVTWYIFLALFG). The Extracellular segment spans residues 1112 to 1128 (MLPPKVSGNIFHMLSET). A helical membrane pass occupies residues 1129–1153 (LAPAPIFWLTSLLVIAATTLPYLAY). The Cytoplasmic segment spans residues 1154 to 1243 (ISFQRSLNPL…TDTTSTTQHS (90 aa)).

This sequence belongs to the cation transport ATPase (P-type) (TC 3.A.3) family. Type IV subfamily.

It localises to the cell membrane. It is found in the endomembrane system. The catalysed reaction is ATP + H2O + phospholipidSide 1 = ADP + phosphate + phospholipidSide 2.. In terms of biological role, involved in transport of phospholipids and in regulation of pollen plasma membrane lipid asymmetry. This is Probable phospholipid-transporting ATPase 7 from Arabidopsis thaliana (Mouse-ear cress).